Here is a 499-residue protein sequence, read N- to C-terminus: MAKQKIRVRYAPSPTGHLHIGNARTALFNYLFARHNKGTMVLRIEDTDQKRNVEGGSKSQMENLHWLGIDWDEGPDKGGDFGPYRQSERKDIYNKYIKQLIDEGKAYYSYKTEEELEAQREEQRAMGIAPHYTYEYEGMTADEIKQAQADAEAKGLKPVVRIHIPENRTYAWDDMVKGKVSFESDTIGGDFVIQKRDGMPTYNFAVVIDDHLMEITHVLRGDDHVANTPKQLVVYEALGWEPPKFGHMTLIINSETGKKLSKRDESVLQFIEQYRDLGYLPEAMFNFITLLGWSPVGESEIFSQRELIKSFDPKRLSKSPAAFDQKKLEWINNQYVKKADRDVLLDLALNNLQEAGLVGKEVSPEKMEWVRQLVNIYAVQMSYTKQIVDITKIFFEEAPELSDAEVEEIKKDDARPVIEEFKKQLNAIPRFTAVQVMNAIQATRRETGVKGRKLFMPIRIAATRSMVGPGIGEAIELMGKEKVNKHIDLTLKQLSDLGL.

The 'HIGH' region motif lies at 12-22; it reads PSPTGHLHIGN. Positions 259-263 match the 'KMSKS' region motif; it reads KLSKR. Lys262 serves as a coordination point for ATP.

The protein belongs to the class-I aminoacyl-tRNA synthetase family. Glutamate--tRNA ligase type 1 subfamily. As to quaternary structure, monomer.

It localises to the cytoplasm. The catalysed reaction is tRNA(Glu) + L-glutamate + ATP = L-glutamyl-tRNA(Glu) + AMP + diphosphate. Its function is as follows. Catalyzes the attachment of glutamate to tRNA(Glu) in a two-step reaction: glutamate is first activated by ATP to form Glu-AMP and then transferred to the acceptor end of tRNA(Glu). The chain is Glutamate--tRNA ligase from Lactobacillus gasseri (strain ATCC 33323 / DSM 20243 / BCRC 14619 / CIP 102991 / JCM 1131 / KCTC 3163 / NCIMB 11718 / NCTC 13722 / AM63).